The primary structure comprises 1032 residues: Connector enhancer of kinase suppressor of ras 2 (1032 aa).

Residues 11–76 (WSPSQVVDWM…LEAVDLLCAL (66 aa)) enclose the SAM domain. Ser-12 carries the post-translational modification Phosphoserine. One can recognise a CRIC domain in the interval 84–178 (NLKTLSHKLN…TIVQQDCTVY (95 aa)). Positions 215–297 (VIQLANIKPS…GVILTLKKRP (83 aa)) constitute a PDZ domain. Residues 302–515 (TSAPALLKNM…PAHYSLLPSL (214 aa)) form the DUF1170 domain. The span at 324-340 (RSPTSSVATPSSTISTP) shows a compositional bias: low complexity. The segment at 324 to 349 (RSPTSSVATPSSTISTPTKRDSSALQ) is disordered. Residues Ser-338 and Ser-390 each carry the phosphoserine modification. Disordered regions lie at residues 480–509 (EEYMFQRNSKKDTGKKSKKKGDKSNSPAHY) and 538–558 (FQQSSLQHKSKKKNKGAISGK). Over residues 545 to 558 (HKSKKKNKGAISGK) the composition is skewed to basic residues. Residues 570–669 (RGDCEGWLWK…WLNRINMLTA (100 aa)) form the PH domain. The tract at residues 682-766 (DYWSESDKEE…PIRKTASQRR (85 aa)) is disordered. Residue Tyr-683 is modified to Phosphotyrosine. Positions 683 to 693 (YWSESDKEEAD) are enriched in acidic residues. Phosphoserine is present on residues Ser-685 and Ser-687. A compositionally biased stretch (pro residues) spans 701 to 714 (DSPPPPYDTYPRPP). The segment covering 730 to 740 (LSSTETSQSQS) has biased composition (low complexity). 2 positions are modified to phosphoserine: Ser-756 and Ser-767. Positions 864–900 (ACDPQDDIQPPEVEEEEEEEEEEAAGENVGEKNENRE) are disordered. A coiled-coil region spans residues 874 to 917 (PEVEEEEEEEEEEAAGENVGEKNENREEKLGDSLQDLYRALEEA). Residues 875-888 (EVEEEEEEEEEEAA) are compositionally biased toward acidic residues. Phosphoserine is present on Ser-906.

This sequence belongs to the CNKSR family. As to quaternary structure, interacts with RAF1, RAB2L and RAL GTPase proteins. Post-translationally, phosphorylated on tyrosine.

It localises to the cytoplasm. It is found in the membrane. Functionally, may function as an adapter protein or regulator of Ras signaling pathways. This is Connector enhancer of kinase suppressor of ras 2 (Cnksr2) from Mus musculus (Mouse).